Here is a 509-residue protein sequence, read N- to C-terminus: ATP synthase subunit alpha (509 aa).

169-176 is an ATP binding site; it reads GDRQTGKT.

It belongs to the ATPase alpha/beta chains family. In terms of assembly, F-type ATPases have 2 components, CF(1) - the catalytic core - and CF(0) - the membrane proton channel. CF(1) has five subunits: alpha(3), beta(3), gamma(1), delta(1), epsilon(1). CF(0) has three main subunits: a(1), b(2) and c(9-12). The alpha and beta chains form an alternating ring which encloses part of the gamma chain. CF(1) is attached to CF(0) by a central stalk formed by the gamma and epsilon chains, while a peripheral stalk is formed by the delta and b chains.

Its subcellular location is the cell inner membrane. The catalysed reaction is ATP + H2O + 4 H(+)(in) = ADP + phosphate + 5 H(+)(out). Functionally, produces ATP from ADP in the presence of a proton gradient across the membrane. The alpha chain is a regulatory subunit. The chain is ATP synthase subunit alpha from Brucella canis (strain ATCC 23365 / NCTC 10854 / RM-666).